A 1442-amino-acid polypeptide reads, in one-letter code: Sulfite reductase [NADPH] subunit beta (1442 aa).

Residues 682-831 (LHVYYASDGG…AYSEWEPKLW (150 aa)) enclose the Flavodoxin-like domain. Ser-903 is subject to Phosphoserine. 4 residues coordinate [4Fe-4S] cluster: Cys-1300, Cys-1306, Cys-1345, and Cys-1349. Residue Cys-1349 coordinates siroheme.

The protein belongs to the nitrite and sulfite reductase 4Fe-4S domain family. As to quaternary structure, alpha(2)-beta(2). The alpha component is a flavoprotein, the beta component is a hemoprotein. The cofactor is siroheme. Requires [4Fe-4S] cluster as cofactor.

The protein resides in the cytoplasm. The catalysed reaction is hydrogen sulfide + 3 NADP(+) + 3 H2O = sulfite + 3 NADPH + 4 H(+). The protein operates within sulfur metabolism; hydrogen sulfide biosynthesis; hydrogen sulfide from sulfite (NADPH route): step 1/1. Catalyzes the reduction of sulfite to sulfide, one of several activities required for the biosynthesis of L-cysteine from sulfate. The polypeptide is Sulfite reductase [NADPH] subunit beta (MET5) (Saccharomyces cerevisiae (strain ATCC 204508 / S288c) (Baker's yeast)).